Consider the following 140-residue polypeptide: MNNEHRFEIDGITYLMTPANAMAAWQSLKRAGVLLRGMDADALTNTQGAASVALGAILSHLGDPAVTEIEALVFEQTAIKTPEGTTYRLSPDRLNEHFNTRRTHLLRVLMEGVKYQYSDFFAGGMAAFQELIPMPSAEKQ.

This is an uncharacterized protein from Xylella fastidiosa (strain Temecula1 / ATCC 700964).